Reading from the N-terminus, the 169-residue chain is Large ribosomal subunit protein uL10 (169 aa).

The protein belongs to the universal ribosomal protein uL10 family. Part of the ribosomal stalk of the 50S ribosomal subunit. The N-terminus interacts with L11 and the large rRNA to form the base of the stalk. The C-terminus forms an elongated spine to which L12 dimers bind in a sequential fashion forming a multimeric L10(L12)X complex.

In terms of biological role, forms part of the ribosomal stalk, playing a central role in the interaction of the ribosome with GTP-bound translation factors. The polypeptide is Large ribosomal subunit protein uL10 (Rickettsia rickettsii (strain Iowa)).